Consider the following 300-residue polypeptide: Probable alpha-L-glutamate ligase (300 aa).

One can recognise an ATP-grasp domain in the interval 104–287; it reads LQLLARQGID…IASRMIAWIE (184 aa). ATP contacts are provided by residues K141, 178–179, D187, and 211–213; these read EY and RSN. Mg(2+)-binding residues include D248, E260, and N262. Residues D248, E260, and N262 each contribute to the Mn(2+) site.

The protein belongs to the RimK family. Requires Mg(2+) as cofactor. It depends on Mn(2+) as a cofactor.

The protein is Probable alpha-L-glutamate ligase of Klebsiella pneumoniae (strain 342).